Here is a 259-residue protein sequence, read N- to C-terminus: Dihydroorotate dehydrogenase B (NAD(+)), electron transfer subunit (259 aa).

In terms of domain architecture, FAD-binding FR-type spans 3-103; that stretch reads KKQGRLTIVK…LGPLGQGFPL (101 aa). FAD is bound by residues 54-57, 71-73, and 78-79; these read RPIS, IYR, and GT. Positions 222, 227, 230, and 246 each coordinate [2Fe-2S] cluster.

Belongs to the PyrK family. In terms of assembly, heterotetramer of 2 PyrK and 2 PyrD type B subunits. Requires [2Fe-2S] cluster as cofactor. FAD serves as cofactor.

Its pathway is pyrimidine metabolism; UMP biosynthesis via de novo pathway; orotate from (S)-dihydroorotate (NAD(+) route): step 1/1. In terms of biological role, responsible for channeling the electrons from the oxidation of dihydroorotate from the FMN redox center in the PyrD type B subunit to the ultimate electron acceptor NAD(+). The protein is Dihydroorotate dehydrogenase B (NAD(+)), electron transfer subunit of Shouchella clausii (strain KSM-K16) (Alkalihalobacillus clausii).